Here is a 419-residue protein sequence, read N- to C-terminus: MINRFSIEKVKGLEIIDSRGNPTIRVFVRTNDGVESFGDAPAGASKGTREAIEVRDENGLTVKRAVDIANYIIDPALHGIDVREQGIIDKILIDIDSTENKSKLGGNTIIATSIAALKTSSKALGLEVFKYIAGPRLPKIPIPLLNIINGGLHAGNKLKIQEFIILPIKFNTFKEAFFAAIEVYRNLKGLISERYGKIYTAVGDEGGFSPPLEETREALDLIYTSINNAGYQGKIYMGMDAAASDFYDPKKEKYIIDGKELNPTQLLEFYLDLAKEYPIVYLEDPFEENSFDMFGELQNKLNSTIVTGDDLYTTNIKYLKIGIEKRSTKGVIVKPNQVGTISETFEFTNLARRNSIKLVTSHRSGETEDNFIAEFAVGIESDFIKTGAPARGERTSKYNKLLEIENKFGLEYGGKYFYL.

Glutamine 161 lines the (2R)-2-phosphoglycerate pocket. Catalysis depends on glutamate 205, which acts as the Proton donor. Mg(2+) contacts are provided by aspartate 240, glutamate 283, and aspartate 309. Lysine 334, arginine 363, serine 364, and lysine 385 together coordinate (2R)-2-phosphoglycerate. Residue lysine 334 is the Proton acceptor of the active site.

Belongs to the enolase family. Mg(2+) is required as a cofactor.

The protein localises to the cytoplasm. It localises to the secreted. Its subcellular location is the cell surface. It catalyses the reaction (2R)-2-phosphoglycerate = phosphoenolpyruvate + H2O. The protein operates within carbohydrate degradation; glycolysis; pyruvate from D-glyceraldehyde 3-phosphate: step 4/5. Functionally, catalyzes the reversible conversion of 2-phosphoglycerate (2-PG) into phosphoenolpyruvate (PEP). It is essential for the degradation of carbohydrates via glycolysis. In Saccharolobus islandicus (strain Y.G.57.14 / Yellowstone #1) (Sulfolobus islandicus), this protein is Enolase.